Consider the following 156-residue polypeptide: UPF0523 protein C (156 aa).

The protein belongs to the UPF0523 family.

This chain is UPF0523 protein C, found in Dictyostelium discoideum (Social amoeba).